Reading from the N-terminus, the 308-residue chain is Putative ankyrin repeat protein R835 (308 aa).

ANK repeat units lie at residues 100–129 (DINE…NIDL), 152–181 (PMNK…YVDF), 190–217 (SEYT…GANY), 218–247 (KSSY…DLEK), 249–277 (GLRS…EIDY), and 279–305 (YYIY…SKQI).

The protein is Putative ankyrin repeat protein R835 of Acanthamoeba polyphaga (Amoeba).